The following is a 376-amino-acid chain: MIKNNKRIKSTVCALSLVALTLGSAVSLACTRFVYLDPHNPDYPITARSMDWADDTETNLWIFPQELKRSGGAGQYSLEWTSKYGSVIASAFDGRKGMASTTDGVNEKGLAANVLWLAESEYPKTKPTAKKPGLSVAAWAQYVLDNFATVDEAVKSLQQEKFILVTKQVEGQKRLATLHLSLSDSSGDSAIIEYIDGKQVIHHSKNYQVMTNSPTFDQQLTLNAYWDQIGGNVMLPGTNRAADRFVRASFYVKNVNPNKLIPGVAEKGKIEKDKADLATAFSIIRNASVPYGYSLPDMPNIASTRWRTVVDHKSLQYFFESAVSPNIFWVDLKKINFAPRGGSAAKLDLGPNQSTIYSGQASGHFKPAQPFEFAGL.

Positions 1-29 (MIKNNKRIKSTVCALSLVALTLGSAVSLA) are cleaved as a signal peptide. Cys30 acts as the Nucleophile in catalysis.

The protein belongs to the peptidase C59 family. Homotetramer. Dimer of dimers.

It localises to the periplasm. It carries out the reaction a penicillin + H2O = 6-aminopenicillanate + a carboxylate. Its activity is regulated as follows. Exhibits uncharacteristic kinetic behavior, showing positive cooperativity coupled with substrate inhibition. Penicillin acylase activity is enhanced in the presence of the reducing agent DTT, indicating active sulfhydryl group in the enzyme. Also shows enhanced activity in presence of organic solvents and detergents. Inhibited largely in presence of Ag(+), Hg(2+) and Cd(2+) ions, which have strong affinities for sulfhydryl groups. Activity is also inhibited by bile salts. In terms of biological role, catalyzes the hydrolysis of penicillin V to 6-aminopenicillanate (6-APA). Shows high specificity towards penicillin V. Can use other beta-lactam substrates, including penicillin G, ampicillin, cephalexin, cloxacillin and dicloxacillin, but at a rate less than 10% of that of penicillin V. Does not show any activity with glyco- or tauro-conjugated bile salts. The protein is Penicillin V acylase of Pectobacterium atrosepticum (strain SCRI 1043 / ATCC BAA-672) (Erwinia carotovora subsp. atroseptica).